We begin with the raw amino-acid sequence, 295 residues long: UDP-3-O-acyl-N-acetylglucosamine deacetylase (295 aa).

Zn(2+) is bound by residues H75, H232, and D236. Catalysis depends on H259, which acts as the Proton donor.

The protein belongs to the LpxC family. Requires Zn(2+) as cofactor.

It carries out the reaction a UDP-3-O-[(3R)-3-hydroxyacyl]-N-acetyl-alpha-D-glucosamine + H2O = a UDP-3-O-[(3R)-3-hydroxyacyl]-alpha-D-glucosamine + acetate. It functions in the pathway glycolipid biosynthesis; lipid IV(A) biosynthesis; lipid IV(A) from (3R)-3-hydroxytetradecanoyl-[acyl-carrier-protein] and UDP-N-acetyl-alpha-D-glucosamine: step 2/6. Its function is as follows. Catalyzes the hydrolysis of UDP-3-O-myristoyl-N-acetylglucosamine to form UDP-3-O-myristoylglucosamine and acetate, the committed step in lipid A biosynthesis. The protein is UDP-3-O-acyl-N-acetylglucosamine deacetylase of Helicobacter pylori (strain J99 / ATCC 700824) (Campylobacter pylori J99).